A 255-amino-acid polypeptide reads, in one-letter code: Thiazole synthase (255 aa).

Catalysis depends on K96, which acts as the Schiff-base intermediate with DXP. 1-deoxy-D-xylulose 5-phosphate-binding positions include G157, 183-184 (AG), and 205-206 (NT).

The protein belongs to the ThiG family. In terms of assembly, homotetramer. Forms heterodimers with either ThiH or ThiS.

It is found in the cytoplasm. It catalyses the reaction [ThiS sulfur-carrier protein]-C-terminal-Gly-aminoethanethioate + 2-iminoacetate + 1-deoxy-D-xylulose 5-phosphate = [ThiS sulfur-carrier protein]-C-terminal Gly-Gly + 2-[(2R,5Z)-2-carboxy-4-methylthiazol-5(2H)-ylidene]ethyl phosphate + 2 H2O + H(+). The protein operates within cofactor biosynthesis; thiamine diphosphate biosynthesis. In terms of biological role, catalyzes the rearrangement of 1-deoxy-D-xylulose 5-phosphate (DXP) to produce the thiazole phosphate moiety of thiamine. Sulfur is provided by the thiocarboxylate moiety of the carrier protein ThiS. In vitro, sulfur can be provided by H(2)S. The polypeptide is Thiazole synthase (Geobacillus thermodenitrificans (strain NG80-2)).